The chain runs to 466 residues: Fumarate hydratase class II (466 aa).

Residues 100–102 (SGT), arginine 128, 131–134 (HPND), 141–143 (STN), and threonine 189 contribute to the substrate site. Histidine 190 functions as the Proton donor/acceptor in the catalytic mechanism. Serine 320 is a catalytic residue. Substrate is bound by residues serine 321 and 326–328 (KVN).

It belongs to the class-II fumarase/aspartase family. Fumarase subfamily. Homotetramer.

The protein resides in the cytoplasm. It catalyses the reaction (S)-malate = fumarate + H2O. It functions in the pathway carbohydrate metabolism; tricarboxylic acid cycle; (S)-malate from fumarate: step 1/1. Functionally, involved in the TCA cycle. Catalyzes the stereospecific interconversion of fumarate to L-malate. This Prochlorococcus marinus (strain MIT 9313) protein is Fumarate hydratase class II.